Consider the following 679-residue polypeptide: Glycine--tRNA ligase beta subunit (679 aa).

It belongs to the class-II aminoacyl-tRNA synthetase family. As to quaternary structure, tetramer of two alpha and two beta subunits.

It localises to the cytoplasm. It carries out the reaction tRNA(Gly) + glycine + ATP = glycyl-tRNA(Gly) + AMP + diphosphate. This chain is Glycine--tRNA ligase beta subunit, found in Streptococcus pyogenes serotype M2 (strain MGAS10270).